We begin with the raw amino-acid sequence, 134 residues long: Small ribosomal subunit protein uS11 (134 aa).

Belongs to the universal ribosomal protein uS11 family. As to quaternary structure, part of the 30S ribosomal subunit. Interacts with proteins S7 and S18. Binds to IF-3.

In terms of biological role, located on the platform of the 30S subunit, it bridges several disparate RNA helices of the 16S rRNA. Forms part of the Shine-Dalgarno cleft in the 70S ribosome. This is Small ribosomal subunit protein uS11 from Corynebacterium diphtheriae (strain ATCC 700971 / NCTC 13129 / Biotype gravis).